The sequence spans 147 residues: Methylated-DNA--protein-cysteine methyltransferase (147 aa).

Cysteine 112 serves as the catalytic Nucleophile; methyl group acceptor.

The protein belongs to the MGMT family.

It localises to the cytoplasm. The catalysed reaction is a 6-O-methyl-2'-deoxyguanosine in DNA + L-cysteinyl-[protein] = S-methyl-L-cysteinyl-[protein] + a 2'-deoxyguanosine in DNA. It carries out the reaction a 4-O-methyl-thymidine in DNA + L-cysteinyl-[protein] = a thymidine in DNA + S-methyl-L-cysteinyl-[protein]. Functionally, involved in the cellular defense against the biological effects of O6-methylguanine (O6-MeG) and O4-methylthymine (O4-MeT) in DNA. Repairs the methylated nucleobase in DNA by stoichiometrically transferring the methyl group to a cysteine residue in the enzyme. This is a suicide reaction: the enzyme is irreversibly inactivated. The sequence is that of Methylated-DNA--protein-cysteine methyltransferase from Archaeoglobus fulgidus (strain ATCC 49558 / DSM 4304 / JCM 9628 / NBRC 100126 / VC-16).